Reading from the N-terminus, the 309-residue chain is L-lactate dehydrogenase 2 (309 aa).

NAD(+)-binding positions include Val16, Asp37, Tyr67, and Gly81 to Val82. Position 90 (Arg90) interacts with substrate. Ser103 lines the NAD(+) pocket. Substrate is bound at residue Asn122 to Asp125. Thr145 is a binding site for NAD(+). A substrate-binding site is contributed by Asp150–Arg153. His177 functions as the Proton acceptor in the catalytic mechanism. Thr227 contributes to the substrate binding site.

The protein belongs to the LDH/MDH superfamily. LDH family. Homotetramer.

It is found in the cytoplasm. It carries out the reaction (S)-lactate + NAD(+) = pyruvate + NADH + H(+). Its pathway is fermentation; pyruvate fermentation to lactate; (S)-lactate from pyruvate: step 1/1. Its function is as follows. Catalyzes the conversion of lactate to pyruvate. The polypeptide is L-lactate dehydrogenase 2 (Lactiplantibacillus plantarum (strain ATCC BAA-793 / NCIMB 8826 / WCFS1) (Lactobacillus plantarum)).